The primary structure comprises 181 residues: Transcriptional repressor NrdR (181 aa).

A zinc finger lies at 3–34 (CPFCRHPDSRVVDSREAEEGSAIRRRRSCLSC). In terms of domain architecture, ATP-cone spans 46–136 (LQVRKRSGAA…VYLAFESLTD (91 aa)). The disordered stretch occupies residues 148–181 (AAGPPTTRDGPARPVPRGAVDVSPVIGTQQVHSR).

The protein belongs to the NrdR family. The cofactor is Zn(2+).

Its function is as follows. Negatively regulates transcription of bacterial ribonucleotide reductase nrd genes and operons by binding to NrdR-boxes. In Frankia casuarinae (strain DSM 45818 / CECT 9043 / HFP020203 / CcI3), this protein is Transcriptional repressor NrdR.